The following is a 142-amino-acid chain: Large ribosomal subunit protein uL11 (142 aa).

This sequence belongs to the universal ribosomal protein uL11 family. As to quaternary structure, part of the ribosomal stalk of the 50S ribosomal subunit. Interacts with L10 and the large rRNA to form the base of the stalk. L10 forms an elongated spine to which L12 dimers bind in a sequential fashion forming a multimeric L10(L12)X complex. Post-translationally, one or more lysine residues are methylated.

Functionally, forms part of the ribosomal stalk which helps the ribosome interact with GTP-bound translation factors. The protein is Large ribosomal subunit protein uL11 of Histophilus somni (strain 129Pt) (Haemophilus somnus).